Here is a 223-residue protein sequence, read N- to C-terminus: UPF0319 protein VPA1584 (223 aa).

The first 21 residues, 1 to 21 (MKLIKPLTCALALAMSGMAFA), serve as a signal peptide directing secretion.

This sequence belongs to the UPF0319 family.

This Vibrio parahaemolyticus serotype O3:K6 (strain RIMD 2210633) protein is UPF0319 protein VPA1584.